Reading from the N-terminus, the 86-residue chain is Small ribosomal subunit protein uS17 (86 aa).

It belongs to the universal ribosomal protein uS17 family. As to quaternary structure, part of the 30S ribosomal subunit.

Functionally, one of the primary rRNA binding proteins, it binds specifically to the 5'-end of 16S ribosomal RNA. The polypeptide is Small ribosomal subunit protein uS17 (Lactococcus lactis subsp. cremoris (strain SK11)).